Consider the following 129-residue polypeptide: CD59B glycoprotein (129 aa).

An N-terminal signal peptide occupies residues 1–23 (MRAQRGLILLLLLLAVFCSTAVS). The 84-residue stretch at 24–107 (LKCYNCLDPV…GLEEPNNAET (84 aa)) folds into the UPAR/Ly6 domain. 5 disulfides stabilise this stretch: cysteine 26–cysteine 49, cysteine 29–cysteine 36, cysteine 42–cysteine 62, cysteine 68–cysteine 86, and cysteine 87–cysteine 92. The N-linked (GlcNAc...) asparagine glycan is linked to asparagine 39. Asparagine 104 is lipidated: GPI-anchor amidated asparagine. Positions 105 to 129 (AETSSLRKTALLGTSVLVAILKFCF) are cleaved as a propeptide — removed in mature form.

As to quaternary structure, interacts with T-cell surface antigen CD2. Post-translationally, N- and O-glycosylated. As to expression, widely expressed in the kidneys, brain, lungs, spleen and testis Testis-specific.

It localises to the cell membrane. It is found in the secreted. Its function is as follows. Potent inhibitor of the complement membrane attack complex (MAC) action, which protects self-cells from damage during complement activation. Acts by binding to the beta-haipins of C8 (C8A and C8B) components of the assembling MAC, forming an intermolecular beta-sheet that prevents incorporation of the multiple copies of C9 required for complete formation of the osmolytic pore. The sequence is that of CD59B glycoprotein from Mus musculus (Mouse).